The chain runs to 356 residues: Heparan sulfate 2-O-sulfotransferase 1 (356 aa).

The Cytoplasmic segment spans residues 1–11; sequence MGLLRIMMPPK. The chain crosses the membrane as a helical; Signal-anchor for type II membrane protein span at residues 12 to 28; sequence LQLLAVLTFGVLMLFLE. Positions 24–51 form a coiled coil; it reads MLFLENQIQNLEESREKLERAIARHEVR. The Lumenal portion of the chain corresponds to 29-356; that stretch reads NQIQNLEESR…FYEKIYPKSN (328 aa). Residues lysine 83, threonine 84, alanine 85, serine 86, threonine 87, and serine 88 each coordinate adenosine 3',5'-bisphosphate. N-linked (GlcNAc...) asparagine glycosylation is found at asparagine 108 and asparagine 127. Residues histidine 140 and histidine 142 contribute to the active site. Adenosine 3',5'-bisphosphate contacts are provided by arginine 164 and serine 172. 2 disulfides stabilise this stretch: cysteine 201–cysteine 209 and cysteine 222–cysteine 228. The adenosine 3',5'-bisphosphate site is built by tyrosine 279, serine 285, threonine 290, and lysine 293.

This sequence belongs to the sulfotransferase 3 family. In terms of assembly, homotrimer.

The protein localises to the golgi apparatus membrane. In terms of biological role, catalyzes the transfer of a sulfo group from 3'-phospho-5'-adenylyl sulfate (PAPS) to the 2-OH position of iduronic acid (IdoA) or glucuronic acid (GlcA) within the heparan sulfate (HS) chain and participates in HS biosynthesis. The chain is Heparan sulfate 2-O-sulfotransferase 1 from Xenopus laevis (African clawed frog).